The sequence spans 191 residues: Classical arabinogalactan protein 9 (191 aa).

An N-terminal signal peptide occupies residues Met1 to Gly20. Residues Gly20–Gly172 form a disordered region. Gln21 bears the Pyrrolidone carboxylic acid mark. 5 positions are modified to 4-hydroxyproline: Pro23, Pro26, Pro27, Pro31, and Pro33. Over residues Thr24–Pro146 the composition is skewed to pro residues. O-linked (Ara...) hydroxyproline glycosylation is found at Pro26, Pro27, Pro31, and Pro33. Residues Thr155–Gly172 show a composition bias toward polar residues. A lipid anchor (GPI-anchor amidated glycine) is attached at Gly172. Residues Ala173–Ile191 constitute a propeptide, removed in mature form.

This sequence belongs to the classical AGP family. O-glycosylated on hydroxyprolines; noncontiguous hydroxylproline residues are glycosylated with arabinogalactan. As to expression, predominantly expressed in flowers and at a lower level in leaves and siliques.

It is found in the cell membrane. Functionally, proteoglycan that seems to be implicated in diverse developmental roles such as differentiation, cell-cell recognition, embryogenesis and programmed cell death. This chain is Classical arabinogalactan protein 9 (AGP9), found in Arabidopsis thaliana (Mouse-ear cress).